A 168-amino-acid chain; its full sequence is Iron-sulfur cluster assembly enzyme ISCU (168 aa).

Residues 1–35 constitute a mitochondrion transit peptide; the sequence is MAAATGAGRLRRAASALLLRSPRLPARELSAPARL. The residue at position 15 (serine 15) is a Phosphoserine. The active-site Cysteine persulfide intermediate is cysteine 70. Cysteine 70 is modified (cysteine persulfide). Positions 72, 96, and 139 each coordinate Zn(2+). Cysteine 139 serves as the catalytic Cysteine persulfide intermediate. Cysteine 139 bears the Cysteine persulfide mark.

Belongs to the NifU family. Homodimer; Tyr-36-mediated dimerization of two iron- and sulfide-containing ISCU subunit bind to the cysteine desulfurase complex. Component of the mitochondrial core iron-sulfur cluster (ISC) complex composed of NFS1, LYRM4, NDUFAB1, ISCU, FXN, and FDX2; this complex is a heterohexamer containing two copies of each monomer. Interacts (D-state) with NFS1 (homodimer form); each monomer interacts with the C-terminal regions of each NFS1 monomer. Interacts (monomer form) with FXN (via ferrous form); the interaction is possible when both are bound to the dimeric form of the cysteine desulfurase complex (NFS1:LYRM4) and enhances FXN interaction to the dimeric form of the cysteine desulfurase complex (NFS1:LYRM4). Interacts with GLRX5. Interacts (D-state) with HSPA9. Interacts (S-state) with HSCB; this interaction stimulates the ATPase activity of HSPA9. Component of a complex composed of FXN, NFS1, LYRM4 and ISCU. Post-translationally, cysteine persulfide is reduced by thiol-containing molecules such as glutathione and L-cysteine. In terms of processing, phosphorylation at Ser-15 is required for ISCU protein stabilization in the cytosol, whereas dephosphorylation of Ser-15, due to the inhibition of mTORC1 (mammalian target of rapamycin complex 1) complex, leads to degradation of the precursor form and ultimately to a decrease in the mitochondrial mature form.

It is found in the mitochondrion. Functionally, mitochondrial scaffold protein, of the core iron-sulfur cluster (ISC) assembly complex, that provides the structural architecture on which the [2Fe-2S] clusters are assembled. The core iron-sulfur cluster (ISC) assembly complex is involved in the de novo synthesis of a [2Fe-2S] cluster, the first step of the mitochondrial iron-sulfur protein biogenesis. This process is initiated by the cysteine desulfurase complex (NFS1:LYRM4:NDUFAB1) that produces persulfide which is delivered on the scaffold protein ISCU in a FXN-dependent manner. Then this complex is stabilized by FDX2 which provides reducing equivalents to accomplish the [2Fe-2S] cluster assembly. Finally, the [2Fe-2S] cluster is transferred from ISCU to chaperone proteins, including HSCB, HSPA9 and GLRX5. Exists as two slow interchanging conformational states, a structured (S) and disordered (D) form. May modulate NFS1 desulfurase activity in a zinc-dependent manner. Modulates the interaction between FXN and the cysteine desulfurase complex. This chain is Iron-sulfur cluster assembly enzyme ISCU, found in Mus musculus (Mouse).